A 508-amino-acid polypeptide reads, in one-letter code: DASH complex subunit ASK1 (508 aa).

Disordered regions lie at residues 86-138 and 150-355; these read LVDG…TLSS and SRAA…QLRS. The segment covering 116–138 has biased composition (polar residues); sequence EPSQYTPRPQTSAGGHDTTTLSS. The segment covering 161 to 175 has biased composition (basic and acidic residues); the sequence is QHHDDSSVLTDRDGD. A compositionally biased stretch (acidic residues) spans 201 to 213; the sequence is DEMDIDMDEEDSE. The segment covering 229–238 has biased composition (basic and acidic residues); it reads RYYDDDHGFE. Residues 239–258 are compositionally biased toward acidic residues; sequence QGEEEEDEEEEEEEEEEEEG. Over residues 326–338 the composition is skewed to basic and acidic residues; that stretch reads IKQEDTEKKRPLW.

Belongs to the DASH complex ASK1 family. Component of the DASH complex consisting of ASK1, DAD1, DAD2, DAD3, DAD4, DAM1, DUO1, HSK3, SPC19 and SPC34, with a stoichiometry of one copy of each subunit per complex. Multiple DASH complexes oligomerize to form a ring that encircles spindle microtubules and organizes the rod-like NDC80 complexes of the outer kinetochore. On cytoplasmic microtubules, DASH complexes appear to form patches instead of rings.

Its subcellular location is the chromosome. It localises to the centromere. The protein resides in the kinetochore. The protein localises to the cytoplasm. It is found in the cytoskeleton. Its subcellular location is the spindle. It localises to the nucleus. Component of the DASH complex that connects microtubules with kinetochores and couples microtubule depolymerisation to chromosome movement; it is involved in retrieving kinetochores to the spindle poles before their re-orientation on the spindle in early mitosis and allows microtubule depolymerization to pull chromosomes apart and resist detachment during anaphase. Kinetochores, consisting of a centromere-associated inner segment and a microtubule-contacting outer segment, play a crucial role in chromosome segregation by mediating the physical connection between centromeric DNA and microtubules. Kinetochores also serve as an input point for the spindle assembly checkpoint, which delays anaphase until all chromosomes have bioriented on the mitotic spindle. In Chaetomium thermophilum (strain DSM 1495 / CBS 144.50 / IMI 039719) (Thermochaetoides thermophila), this protein is DASH complex subunit ASK1.